The following is a 565-amino-acid chain: NAD-dependent malic enzyme (565 aa).

Y104 serves as the catalytic Proton donor. Residue R157 participates in NAD(+) binding. The Proton acceptor role is filled by K175. Residues E246, D247, and D270 each coordinate a divalent metal cation. The NAD(+) site is built by D270 and N418.

The protein belongs to the malic enzymes family. Homotetramer. Requires Mg(2+) as cofactor. Mn(2+) is required as a cofactor.

It carries out the reaction (S)-malate + NAD(+) = pyruvate + CO2 + NADH. The catalysed reaction is oxaloacetate + H(+) = pyruvate + CO2. This is NAD-dependent malic enzyme from Escherichia coli (strain SMS-3-5 / SECEC).